Consider the following 469-residue polypeptide: Argininosuccinate lyase (469 aa).

This sequence belongs to the lyase 1 family. Argininosuccinate lyase subfamily.

It localises to the cytoplasm. It catalyses the reaction 2-(N(omega)-L-arginino)succinate = fumarate + L-arginine. The protein operates within amino-acid biosynthesis; L-arginine biosynthesis; L-arginine from L-ornithine and carbamoyl phosphate: step 3/3. The protein is Argininosuccinate lyase of Burkholderia mallei (strain NCTC 10247).